The sequence spans 384 residues: Multidrug/solvent efflux pump periplasmic linker protein MepA (384 aa).

The N-terminal stretch at 1-22 (MQFKPAVTALVSAVALATLLSG) is a signal peptide. The N-palmitoyl cysteine moiety is linked to residue Cys23. Residue Cys23 is the site of S-diacylglycerol cysteine attachment. Residues 115-155 (LAERYKQLIDEQAVSKQEYDDANAKRLQAEASLKSAQIDLR) are a coiled coil. The disordered stretch occupies residues 362-384 (ATNVKKPAGPDQANAAKADAKAE). Positions 368 to 378 (PAGPDQANAAK) are enriched in low complexity.

It belongs to the membrane fusion protein (MFP) (TC 8.A.1) family.

It localises to the cell inner membrane. In terms of biological role, the periplasmic linker protein component of an organic solvent and antibiotic efflux pump; confers resistance to toluene, hexane, p-xylene, ampicillin, penicillin G, erythromycin, novobiocin and tetracycline. This Pseudomonas putida (Arthrobacter siderocapsulatus) protein is Multidrug/solvent efflux pump periplasmic linker protein MepA (mepA).